We begin with the raw amino-acid sequence, 499 residues long: Endoglucanase 3 (499 aa).

The signal sequence occupies residues 1 to 19; that stretch reads MALLRCLFLLAVLLPHRNA. Residue aspartate 88 is the Nucleophile of the active site. Catalysis depends on residues histidine 416, aspartate 467, and glutamate 476.

The protein belongs to the glycosyl hydrolase 9 (cellulase E) family. Expressed in flowers.

The protein resides in the secreted. The enzyme catalyses Endohydrolysis of (1-&gt;4)-beta-D-glucosidic linkages in cellulose, lichenin and cereal beta-D-glucans.. The chain is Endoglucanase 3 (GLU8) from Oryza sativa subsp. japonica (Rice).